The following is a 194-amino-acid chain: Endoribonuclease YbeY (194 aa).

His127, His131, and Asp137 together coordinate Zn(2+). The interval Pro162–Ser194 is disordered. Residues Asn165–Ser182 are compositionally biased toward acidic residues.

Belongs to the endoribonuclease YbeY family. Requires Zn(2+) as cofactor.

It localises to the cytoplasm. Single strand-specific metallo-endoribonuclease involved in late-stage 70S ribosome quality control and in maturation of the 3' terminus of the 16S rRNA. This is Endoribonuclease YbeY from Rhodopirellula baltica (strain DSM 10527 / NCIMB 13988 / SH1).